The sequence spans 926 residues: Storkhead-box protein 2 (926 aa).

Disordered stretches follow at residues methionine 1–lysine 32, glutamate 338–glycine 393, glutamate 452–aspartate 529, lysine 564–glycine 586, valine 633–lysine 693, leucine 723–methionine 802, and threonine 823–valine 926. Residues phenylalanine 18–lysine 32 are compositionally biased toward basic and acidic residues. Residues histidine 353–valine 378 show a composition bias toward basic residues. The segment covering serine 379–glycine 393 has biased composition (basic and acidic residues). The span at serine 463–serine 472 shows a compositional bias: basic residues. Over residues histidine 473–aspartate 495 the composition is skewed to basic and acidic residues. A compositionally biased stretch (polar residues) spans glutamine 518 to aspartate 529. Composition is skewed to basic and acidic residues over residues valine 633–proline 658 and histidine 684–lysine 693. Residues leucine 746–alanine 769 are compositionally biased toward polar residues. A compositionally biased stretch (basic and acidic residues) spans glycine 785–valine 799. Composition is skewed to polar residues over residues methionine 847–alanine 884 and lysine 914–valine 926.

The protein is Storkhead-box protein 2 (Stox2) of Mus musculus (Mouse).